Consider the following 489-residue polypeptide: Rhamnulokinase (489 aa).

Residue 13–17 (ASSGR) participates in ATP binding. The cysteines at positions 68 and 222 are disulfide-linked. Residues glycine 83 and 236 to 238 (HDT) contribute to the substrate site. Aspartate 237 acts as the Proton acceptor in catalysis. Threonine 259 contributes to the ATP binding site. Asparagine 296 lines the substrate pocket. Glutamine 304 contacts ATP. Cysteines 353 and 370 form a disulfide. Glycine 402 provides a ligand contact to ATP. Cysteine 413 and cysteine 417 are joined by a disulfide.

The protein belongs to the rhamnulokinase family. Monomer. Requires Mg(2+) as cofactor.

The catalysed reaction is L-rhamnulose + ATP = L-rhamnulose 1-phosphate + ADP + H(+). Its pathway is carbohydrate degradation; L-rhamnose degradation; glycerone phosphate from L-rhamnose: step 2/3. Involved in the catabolism of L-rhamnose (6-deoxy-L-mannose). Catalyzes the transfer of the gamma-phosphate group from ATP to the 1-hydroxyl group of L-rhamnulose to yield L-rhamnulose 1-phosphate. In Escherichia coli O9:H4 (strain HS), this protein is Rhamnulokinase.